The following is a 59-amino-acid chain: Large ribosomal subunit protein uL30 (59 aa).

The protein belongs to the universal ribosomal protein uL30 family. Part of the 50S ribosomal subunit.

This Aeromonas hydrophila subsp. hydrophila (strain ATCC 7966 / DSM 30187 / BCRC 13018 / CCUG 14551 / JCM 1027 / KCTC 2358 / NCIMB 9240 / NCTC 8049) protein is Large ribosomal subunit protein uL30.